A 132-amino-acid polypeptide reads, in one-letter code: Glycine cleavage system H protein (132 aa).

Residues 27 to 109 (FATIGISAFA…FDFGWILKVK (83 aa)) form the Lipoyl-binding domain. N6-lipoyllysine is present on K68.

It belongs to the GcvH family. As to quaternary structure, the glycine cleavage system is composed of four proteins: P, T, L and H. (R)-lipoate serves as cofactor.

Functionally, the glycine cleavage system catalyzes the degradation of glycine. The H protein shuttles the methylamine group of glycine from the P protein to the T protein. This is Glycine cleavage system H protein from Rhodopirellula baltica (strain DSM 10527 / NCIMB 13988 / SH1).